The sequence spans 493 residues: ATP synthase subunit beta, chloroplastic (493 aa).

Residue 170 to 177 coordinates ATP; that stretch reads GGAGVGKT.

The protein belongs to the ATPase alpha/beta chains family. F-type ATPases have 2 components, CF(1) - the catalytic core - and CF(0) - the membrane proton channel. CF(1) has five subunits: alpha(3), beta(3), gamma(1), delta(1), epsilon(1). CF(0) has four main subunits: a(1), b(1), b'(1) and c(9-12).

It is found in the plastid. The protein localises to the chloroplast thylakoid membrane. The catalysed reaction is ATP + H2O + 4 H(+)(in) = ADP + phosphate + 5 H(+)(out). Its function is as follows. Produces ATP from ADP in the presence of a proton gradient across the membrane. The catalytic sites are hosted primarily by the beta subunits. The sequence is that of ATP synthase subunit beta, chloroplastic from Lachenalia pusilla (Cape cowslips).